Here is a 351-residue protein sequence, read N- to C-terminus: DNA nickase (351 aa).

Fe cation contacts are provided by H241, E245, and H303.

Its function is as follows. Acts as a DNA nickase. In Nostoc sp. (strain PCC 7120 / SAG 25.82 / UTEX 2576), this protein is DNA nickase.